The following is a 367-amino-acid chain: Mannan endo-1,4-beta-mannosidase (367 aa).

The first 17 residues, 1 to 17, serve as a signal peptide directing secretion; the sequence is MLLTALAVLFASTGCQA. Positions 79 and 176 each coordinate substrate. E177 acts as the Proton donor in catalysis. The cysteines at positions 192 and 259 are disulfide-linked. Residues W205, W240, and Y279 each contribute to the substrate site. E308 acts as the Nucleophile in catalysis. Residue W337 participates in substrate binding.

Monomer. The disulfide bond between Cys-192 and Cys-259 has not been observed in X-ray crystallography. This may be a consequence of the X-ray radiation.

The enzyme catalyses Random hydrolysis of (1-&gt;4)-beta-D-mannosidic linkages in mannans, galactomannans and glucomannans.. Functionally, hydrolyzes 1,4-beta linked polysaccharide backbones of mannans. Hydrolyzes mannohexaose (M6) preferentially to mannotriose (M4) and less preferentially to mannotetraose (M3), mannopentaose (M5), and mannobiose (M2); hydrolyzes M5 preferentially to M2, and M3, and less preferentially to mannotetraose M4; hydrolyzes M4 preferentially to M3, and less preferentially to mannose (M1), plus very little M2. Does not hydrolyze mannobiose or mannotriose. Does not hydrolyze xlyan, starch, cellulose or galactose. The polypeptide is Mannan endo-1,4-beta-mannosidase (Mytilus edulis (Blue mussel)).